A 298-amino-acid chain; its full sequence is GTP cyclohydrolase FolE2 (298 aa).

It belongs to the GTP cyclohydrolase IV family.

It catalyses the reaction GTP + H2O = 7,8-dihydroneopterin 3'-triphosphate + formate + H(+). It participates in cofactor biosynthesis; 7,8-dihydroneopterin triphosphate biosynthesis; 7,8-dihydroneopterin triphosphate from GTP: step 1/1. Converts GTP to 7,8-dihydroneopterin triphosphate. In Pseudomonas paraeruginosa (strain DSM 24068 / PA7) (Pseudomonas aeruginosa (strain PA7)), this protein is GTP cyclohydrolase FolE2.